Reading from the N-terminus, the 77-residue chain is Conotoxin G11.1 (77 aa).

A signal peptide spans 1 to 20 (MKLFLAIVLILMLQFLSTGA). The propeptide occupies 21–45 (ETSDNHASRSTTALRDWLLGPKAKR). Intrachain disulfides connect C46–C60, C53–C65, C59–C69, and C64–C76.

It belongs to the conotoxin I3 superfamily. In terms of tissue distribution, expressed by the venom duct.

The protein localises to the secreted. Its function is as follows. May embed in the membrane and bind to the voltage sensor domain of a ion channel. Does not induce paralysis when injected in fish, leading to the hypothesis that it may be part of the sedative nirvana cabal. The chain is Conotoxin G11.1 from Conus geographus (Geography cone).